Consider the following 576-residue polypeptide: MNYCKISFYFLLSISLSLFLISLKFLLKDLVYFIEWEAWVFKSMSIVMTFLFDWMSLMFMSFVLLISSLVIFYSNQYMEEDYNINRFILLVLMFVMSMMMLIISPNLISILLGWDGLGLVSYCLVIYFQNVKSYNAGMLTALSNRIGDVALLLAIAWMLNYGSWNYIFYLEMMSKNTEMMIIGGLVMLAAMTKSAQIPFSSWLPAAMAAPTPVSALVHSSTLVTAGLYLLIRFNILLTDWWMGQFMLLISGLTMFMAGLGANFEFDLKKIIALSTLSQLGLMMSILSMGFYKLAFFHLLTHALFKALLFMCAGSIIHNMKNSQDIRMMGSLSMSMPLTCSCFNVANLALCGMPFLAGFYSKDLILEMVSLSYVNVFSFFLFFFSTGLTVCYSFRLVYYSMTGDFNSSVLHPLNDSGWTMLFSIFFLMIMAVIGGSMLSWLMFLNPSMICLPFDLKMLTLFVCILGGLIGYLLSNVSLFFTNKALYFYNFTYFAGSMWFMPVVSTIGVINYPLKLGLYSYKSFDQGWSEFFGGQMIYNQLKNYSLYLQEFQMNSLKIYLLSYMLWFIVLLMLVVLVN.

16 helical membrane passes run 6–26, 46–66, 88–108, 109–129, 149–169, 179–199, 211–231, 240–260, 270–289, 294–316, 339–359, 363–383, 423–443, 459–479, 492–512, and 556–576; these read ISFY…LKFL, IVMT…VLLI, ILLV…PNLI, SILL…IYFQ, VALL…YIFY, MMII…QIPF, TPVS…YLLI, WWMG…AGLG, IIAL…LSMG, AFFH…GSII, CSCF…AGFY, LILE…LFFF, IFFL…LMFL, LFVC…SLFF, FAGS…NYPL, and IYLL…VLVN.

It belongs to the complex I subunit 5 family.

It localises to the mitochondrion inner membrane. It catalyses the reaction a ubiquinone + NADH + 5 H(+)(in) = a ubiquinol + NAD(+) + 4 H(+)(out). Core subunit of the mitochondrial membrane respiratory chain NADH dehydrogenase (Complex I) that is believed to belong to the minimal assembly required for catalysis. Complex I functions in the transfer of electrons from NADH to the respiratory chain. The immediate electron acceptor for the enzyme is believed to be ubiquinone. The protein is NADH-ubiquinone oxidoreductase chain 5 (ND5) of Anopheles quadrimaculatus (Common malaria mosquito).